A 633-amino-acid chain; its full sequence is DNA-directed RNA polymerase subunit beta' (633 aa).

The Zn(2+) site is built by cysteine 72, cysteine 74, cysteine 87, and cysteine 90. Mg(2+)-binding residues include aspartate 468, aspartate 470, and aspartate 472.

Belongs to the RNA polymerase beta' chain family. RpoC1 subfamily. In plastids the minimal PEP RNA polymerase catalytic core is composed of four subunits: alpha, beta, beta', and beta''. When a (nuclear-encoded) sigma factor is associated with the core the holoenzyme is formed, which can initiate transcription. Requires Mg(2+) as cofactor. Zn(2+) serves as cofactor.

It localises to the plastid. The protein localises to the chloroplast. The catalysed reaction is RNA(n) + a ribonucleoside 5'-triphosphate = RNA(n+1) + diphosphate. Functionally, DNA-dependent RNA polymerase catalyzes the transcription of DNA into RNA using the four ribonucleoside triphosphates as substrates. This is DNA-directed RNA polymerase subunit beta' from Cyanidium caldarium (Red alga).